The sequence spans 144 residues: Cytochrome c oxidase subunit 4 isoform 1, mitochondrial (144 aa).

Residues 1–73 (SVVKSEDFTL…SFAEMNRRSN (73 aa)) lie on the Mitochondrial matrix side of the membrane. Lys4 bears the N6-acetyllysine; alternate mark. Lys4 carries the N6-succinyllysine; alternate modification. Residue Lys28 is modified to N6-acetyllysine. Phosphoserine is present on residues Ser31 and Ser33. Lys35 bears the N6-acetyllysine; alternate mark. Lys35 carries the post-translational modification N6-succinyllysine; alternate. Lys42 is modified (N6-acetyllysine). Residues 74–99 (EWKTVVGTAMFFFGITALIVMWEKRY) form a helical membrane-spanning segment. Residues 100 to 144 (VYGPLPQTFDKEWVAMQTKRMLDMKVNPIQGLASKWDYEKNEWKK) are Mitochondrial intermembrane-facing.

This sequence belongs to the cytochrome c oxidase IV family. As to quaternary structure, component of the cytochrome c oxidase (complex IV, CIV), a multisubunit enzyme composed of 14 subunits. The complex is composed of a catalytic core of 3 subunits MT-CO1, MT-CO2 and MT-CO3, encoded in the mitochondrial DNA, and 11 supernumerary subunits COX4I, COX5A, COX5B, COX6A, COX6B, COX6C, COX7A, COX7B, COX7C, COX8 and NDUFA4, which are encoded in the nuclear genome. The complex exists as a monomer or a dimer and forms supercomplexes (SCs) in the inner mitochondrial membrane with NADH-ubiquinone oxidoreductase (complex I, CI) and ubiquinol-cytochrome c oxidoreductase (cytochrome b-c1 complex, complex III, CIII), resulting in different assemblies (supercomplex SCI(1)III(2)IV(1) and megacomplex MCI(2)III(2)IV(2)). Interacts with PHB2; the interaction decreases in absence of SPHK2. Interacts with AFG1L. Interacts with ABCB7; this interaction allows the regulation of cellular iron homeostasis and cellular reactive oxygen species (ROS) levels in cardiomyocytes. Interacts with FLVCR2; this interaction occurs in the absence of heme and is disrupted upon heme binding. Interacts with IRGC.

It localises to the mitochondrion inner membrane. The protein operates within energy metabolism; oxidative phosphorylation. Functionally, component of the cytochrome c oxidase, the last enzyme in the mitochondrial electron transport chain which drives oxidative phosphorylation. The respiratory chain contains 3 multisubunit complexes succinate dehydrogenase (complex II, CII), ubiquinol-cytochrome c oxidoreductase (cytochrome b-c1 complex, complex III, CIII) and cytochrome c oxidase (complex IV, CIV), that cooperate to transfer electrons derived from NADH and succinate to molecular oxygen, creating an electrochemical gradient over the inner membrane that drives transmembrane transport and the ATP synthase. Cytochrome c oxidase is the component of the respiratory chain that catalyzes the reduction of oxygen to water. Electrons originating from reduced cytochrome c in the intermembrane space (IMS) are transferred via the dinuclear copper A center (CU(A)) of subunit 2 and heme A of subunit 1 to the active site in subunit 1, a binuclear center (BNC) formed by heme A3 and copper B (CU(B)). The BNC reduces molecular oxygen to 2 water molecules using 4 electrons from cytochrome c in the IMS and 4 protons from the mitochondrial matrix. This chain is Cytochrome c oxidase subunit 4 isoform 1, mitochondrial (COX4I1), found in Theropithecus gelada (Gelada baboon).